A 374-amino-acid chain; its full sequence is Coiled-coil domain-containing protein 89 (374 aa).

A disordered region spans residues 1-40; the sequence is MRAPMLQKQQAPRMDTPPPEERLEKQNEKLNNQEEETEFK. T16 carries the post-translational modification Phosphothreonine. The segment covering 19-32 has biased composition (basic and acidic residues); sequence PEERLEKQNEKLNN. Positions 20-351 form a coiled coil; the sequence is EERLEKQNEK…DELRLQSEAF (332 aa).

Belongs to the CCDC89 family. Interacts with HEY1.

The protein localises to the cytoplasm. It localises to the nucleus. This is Coiled-coil domain-containing protein 89 (CCDC89) from Homo sapiens (Human).